Consider the following 346-residue polypeptide: Cyclin-dependent kinase 7 (346 aa).

Ala-2 is subject to N-acetylalanine. Ser-7 is modified (phosphoserine). In terms of domain architecture, Protein kinase spans Tyr-12–Phe-295. Residues Leu-18 to Val-26 and Lys-41 contribute to the ATP site. Asp-137 serves as the catalytic Proton acceptor. Ser-164 is modified (phosphoserine; by CDK1 and CDK2). Thr-170 carries the post-translational modification Phosphothreonine; by CDK2. Phosphoserine is present on Ser-321.

This sequence belongs to the protein kinase superfamily. CMGC Ser/Thr protein kinase family. CDC2/CDKX subfamily. Associates primarily with cyclin-H (CCNH) and MAT1 to form the CAK complex. CAK can further associate with the core-TFIIH to form the TFIIH basal transcription factor; this complex is sensitive to UV light. The CAK complex binds to p53/TP53 in response to DNA damage. Interacts with CDK2, SF1/NR5A1, PUF60 and PRKCI. Interacts with HINT1. In terms of processing, phosphorylation of Ser-164 during mitosis inactivates the enzyme. Phosphorylation of Thr-170 is required for activity. Phosphorylated at Ser-164 and Thr-170 by CDK2. In terms of tissue distribution, ubiquitous.

Its subcellular location is the nucleus. The protein resides in the cytoplasm. It is found in the perinuclear region. It carries out the reaction L-seryl-[protein] + ATP = O-phospho-L-seryl-[protein] + ADP + H(+). The catalysed reaction is L-threonyl-[protein] + ATP = O-phospho-L-threonyl-[protein] + ADP + H(+). The enzyme catalyses [DNA-directed RNA polymerase] + ATP = phospho-[DNA-directed RNA polymerase] + ADP + H(+). With respect to regulation, inactivated by phosphorylation. Repressed by roscovitine (seliciclib, CYC202), R547 (Ro-4584820) and SNS-032 (BMS-387032). The association of p53/TP53 to the CAK complex in response to DNA damage reduces kinase activity toward CDK2 and RNA polymerase II repetitive C-terminal domain (CTD), thus stopping cell cycle progression. The inactivation by roscovitine promotes caspase-mediated apoptosis in leukemic cells. Specifically inactivated by THZ1. Functionally, serine/threonine kinase involved in cell cycle control and in RNA polymerase II-mediated RNA transcription. Cyclin-dependent kinases (CDKs) are activated by the binding to a cyclin and mediate the progression through the cell cycle. Each different complex controls a specific transition between 2 subsequent phases in the cell cycle. Required for both activation and complex formation of CDK1/cyclin-B during G2-M transition, and for activation of CDK2/cyclins during G1-S transition (but not complex formation). CDK7 is the catalytic subunit of the CDK-activating kinase (CAK) complex. Phosphorylates SPT5/SUPT5H, SF1/NR5A1, POLR2A, p53/TP53, CDK1, CDK2, CDK4, CDK6 and CDK11B/CDK11. Initiates transcription by RNA polymerase II by mediating phosphorylation of POLR2A at 'Ser-5' of the repetitive C-terminal domain (CTD) when POLR2A is in complex with DNA, promoting dissociation from DNA and initiation. CAK activates the cyclin-associated kinases CDK1, CDK2, CDK4 and CDK6 by threonine phosphorylation, thus regulating cell cycle progression. CAK complexed to the core-TFIIH basal transcription factor activates RNA polymerase II by serine phosphorylation of the CTD of POLR2A, allowing its escape from the promoter and elongation of the transcripts. Its expression and activity are constant throughout the cell cycle. Upon DNA damage, triggers p53/TP53 activation by phosphorylation, but is inactivated in turn by p53/TP53; this feedback loop may lead to an arrest of the cell cycle and of the transcription, helping in cell recovery, or to apoptosis. Required for DNA-bound peptides-mediated transcription and cellular growth inhibition. This chain is Cyclin-dependent kinase 7 (CDK7), found in Homo sapiens (Human).